The primary structure comprises 107 residues: Death-associated protein-like 1 (107 aa).

A disordered region spans residues 1–26 (MANEVQVQLSPLKGGHPPAVKAGGKR).

Detected in the corneal epithelium, and only in trace amounts in the liver, bladder, brain, heart, and stomach.

Its function is as follows. May play a role in the early stages of epithelial differentiation or in apoptosis. In Bos taurus (Bovine), this protein is Death-associated protein-like 1 (DAPL1).